A 95-amino-acid chain; its full sequence is uncharacterized protein (95 aa).

The first 22 residues, 1 to 22 (MLPGFTMIITSLLLTFFREVEH), serve as a signal peptide directing secretion. The Extracellular segment spans residues 23-52 (LLPECLTITNTPQRTLVLIQRFTLLQKVMT). A helical transmembrane segment spans residues 53–69 (IHLLLSIGTLGSLFTLH). Topologically, residues 70 to 95 (PQLLKTNLLQKLHKELNSNLDYLISC) are cytoplasmic.

Its subcellular location is the host membrane. This is an uncharacterized protein from Acidianus bottle-shaped virus (isolate Italy/Pozzuoli) (ABV).